The chain runs to 138 residues: Ribosome-binding factor A (138 aa).

Residues 119–138 are disordered; sequence DMDEKKNSDEKRDSDEKLED.

The protein belongs to the RbfA family. In terms of assembly, monomer. Binds 30S ribosomal subunits, but not 50S ribosomal subunits or 70S ribosomes.

The protein resides in the cytoplasm. Functionally, one of several proteins that assist in the late maturation steps of the functional core of the 30S ribosomal subunit. Associates with free 30S ribosomal subunits (but not with 30S subunits that are part of 70S ribosomes or polysomes). Required for efficient processing of 16S rRNA. May interact with the 5'-terminal helix region of 16S rRNA. The chain is Ribosome-binding factor A from Alkaliphilus metalliredigens (strain QYMF).